The primary structure comprises 424 residues: GTPase Obg (424 aa).

Residues 1–158 form the Obg domain; it reads MFVDRAEVFV…RYISLELKIL (158 aa). Positions 21–42 are disordered; it reads SFRREKYVPRGGPDGGDGGKGG. Residues 32-42 are compositionally biased toward gly residues; the sequence is GPDGGDGGKGG. An OBG-type G domain is found at 159–331; that stretch reads ADVGLLGFPN…LMKEAAAMLT (173 aa). Residues 165–172, 190–194, 212–215, 282–285, and 312–314 each bind GTP; these read GFPNVGKS, FTTLS, DIPG, NKAD, and SAA. The Mg(2+) site is built by Ser-172 and Thr-192. The 80-residue stretch at 345 to 424 folds into the OCT domain; sequence KFIPEEKRFT…LNDFEFDYIL (80 aa).

Belongs to the TRAFAC class OBG-HflX-like GTPase superfamily. OBG GTPase family. In terms of assembly, monomer. Requires Mg(2+) as cofactor.

It localises to the cytoplasm. In terms of biological role, an essential GTPase which binds GTP, GDP and possibly (p)ppGpp with moderate affinity, with high nucleotide exchange rates and a fairly low GTP hydrolysis rate. Plays a role in control of the cell cycle, stress response, ribosome biogenesis and in those bacteria that undergo differentiation, in morphogenesis control. The polypeptide is GTPase Obg (Clostridium kluyveri (strain NBRC 12016)).